The sequence spans 262 residues: Acyl-[acyl-carrier-protein]--UDP-N-acetylglucosamine O-acyltransferase (262 aa).

The protein belongs to the transferase hexapeptide repeat family. LpxA subfamily. Homotrimer.

The protein localises to the cytoplasm. It carries out the reaction a (3R)-hydroxyacyl-[ACP] + UDP-N-acetyl-alpha-D-glucosamine = a UDP-3-O-[(3R)-3-hydroxyacyl]-N-acetyl-alpha-D-glucosamine + holo-[ACP]. Its pathway is glycolipid biosynthesis; lipid IV(A) biosynthesis; lipid IV(A) from (3R)-3-hydroxytetradecanoyl-[acyl-carrier-protein] and UDP-N-acetyl-alpha-D-glucosamine: step 1/6. Functionally, involved in the biosynthesis of lipid A, a phosphorylated glycolipid that anchors the lipopolysaccharide to the outer membrane of the cell. The polypeptide is Acyl-[acyl-carrier-protein]--UDP-N-acetylglucosamine O-acyltransferase (Burkholderia ambifaria (strain MC40-6)).